The primary structure comprises 501 residues: NAD(P)H-quinone oxidoreductase subunit 2, chloroplastic (501 aa).

14 consecutive transmembrane segments (helical) span residues 15-35 (ILPE…DLIL), 42-62 (VFFF…IFQL), 82-102 (IFRI…IDFI), 107-127 (LAIT…MFLC), 132-152 (LITI…LSGY), 167-187 (LLIG…LYGL), 210-230 (FGSL…LSLV), 244-264 (PTPV…ALLV), 278-298 (WHSL…LVAI), 307-327 (LAYS…TGNF), 334-354 (IVYL…IILF), 378-398 (FSLA…GFFG), 410-430 (GLYF…YYYL), and 466-486 (VSII…NPII).

Belongs to the complex I subunit 2 family. In terms of assembly, NDH is composed of at least 16 different subunits, 5 of which are encoded in the nucleus.

The protein localises to the plastid. The protein resides in the chloroplast thylakoid membrane. The catalysed reaction is a plastoquinone + NADH + (n+1) H(+)(in) = a plastoquinol + NAD(+) + n H(+)(out). The enzyme catalyses a plastoquinone + NADPH + (n+1) H(+)(in) = a plastoquinol + NADP(+) + n H(+)(out). Its function is as follows. NDH shuttles electrons from NAD(P)H:plastoquinone, via FMN and iron-sulfur (Fe-S) centers, to quinones in the photosynthetic chain and possibly in a chloroplast respiratory chain. The immediate electron acceptor for the enzyme in this species is believed to be plastoquinone. Couples the redox reaction to proton translocation, and thus conserves the redox energy in a proton gradient. This chain is NAD(P)H-quinone oxidoreductase subunit 2, chloroplastic, found in Physcomitrium patens (Spreading-leaved earth moss).